A 93-amino-acid polypeptide reads, in one-letter code: Probable Fe(2+)-trafficking protein (93 aa).

Belongs to the Fe(2+)-trafficking protein family.

Could be a mediator in iron transactions between iron acquisition and iron-requiring processes, such as synthesis and/or repair of Fe-S clusters in biosynthetic enzymes. In Polaromonas naphthalenivorans (strain CJ2), this protein is Probable Fe(2+)-trafficking protein.